A 59-amino-acid polypeptide reads, in one-letter code: Large ribosomal subunit protein bL32 (59 aa).

Belongs to the bacterial ribosomal protein bL32 family.

The protein is Large ribosomal subunit protein bL32 of Lactiplantibacillus plantarum (strain ATCC BAA-793 / NCIMB 8826 / WCFS1) (Lactobacillus plantarum).